The following is a 247-amino-acid chain: Carboxy-S-adenosyl-L-methionine synthase (247 aa).

S-adenosyl-L-methionine is bound by residues Tyr-39, 64–66, 89–90, 117–118, Asn-132, and Arg-199; these read GCS, DN, and DI.

Belongs to the class I-like SAM-binding methyltransferase superfamily. Cx-SAM synthase family. Homodimer.

It catalyses the reaction prephenate + S-adenosyl-L-methionine = carboxy-S-adenosyl-L-methionine + 3-phenylpyruvate + H2O. Its function is as follows. Catalyzes the conversion of S-adenosyl-L-methionine (SAM) to carboxy-S-adenosyl-L-methionine (Cx-SAM). This chain is Carboxy-S-adenosyl-L-methionine synthase, found in Shigella boydii serotype 4 (strain Sb227).